A 389-amino-acid polypeptide reads, in one-letter code: MEKAIRNFLSQESAGGILLLVAVVLAMLMANSPLAGLYQGFLGTEVQVRVGALDLHKPLLLWINDGLMALFFLLIGLEVKRELLEGALSSVAQASLPTFAAIGGMLVPAGIYLLFNYGDPVTQVGWAIPAATDIAFALGIMALLGSRVPVALKVFLLALAIIDDLGVIVIIALFYSSDLSTISLIIASIAIVGLVALNRKGVTALAPYGVLGLVLWVAVLKSGVHATLAGVIIAFCIPLRAKDGSSPSEHLEHSLHPWSTFLILPVFAFANAGVALGNMSLDALISPVPVGIALGLMLGKPIGVMLFSYVAVKLKLAQLPDGIGWKQIAPVAAMCGIGFTMSMFIASLAFEQADPMFGDLARLGTLIGSILAALIGYFWLSKVLPKKGV.

The next 11 membrane-spanning stretches (helical) occupy residues 17–37 (ILLL…LAGL), 59–79 (LLLW…GLEV), 95–115 (SLPT…YLLF), 124–144 (VGWA…MALL), 154–174 (VFLL…IALF), 177–197 (SDLS…LVAL), 213–233 (LVLW…GVII), 261–281 (FLIL…NMSL), 287–307 (PVPV…VMLF), 328–348 (IAPV…IASL), and 363–383 (LGTL…LSKV).

The protein belongs to the NhaA Na(+)/H(+) (TC 2.A.33) antiporter family.

It is found in the cell inner membrane. The enzyme catalyses Na(+)(in) + 2 H(+)(out) = Na(+)(out) + 2 H(+)(in). In terms of biological role, na(+)/H(+) antiporter that extrudes sodium in exchange for external protons. In Shewanella sp. (strain ANA-3), this protein is Na(+)/H(+) antiporter NhaA.